The following is a 404-amino-acid chain: Coenzyme F420H(2) oxidase (404 aa).

Fe cation-binding residues include histidine 83, glutamate 85, aspartate 87, histidine 88, histidine 151, aspartate 170, and histidine 233. A Flavodoxin-like domain is found at 259 to 399 (VTVIYDTMHG…ACFEAGRKLA (141 aa)). FMN contacts are provided by residues 265-270 (TMHGST), 317-320 (TIYD), and 351-356 (SMGGNG).

It in the N-terminal section; belongs to the zinc metallo-hydrolase group 3 family. Homodimer. Homotetramer. The tetramer is composed of two functional dimers. FMN serves as cofactor. Requires Fe cation as cofactor.

It carries out the reaction 2 reduced coenzyme F420-(gamma-L-Glu)(n) + O2 = 2 oxidized coenzyme F420-(gamma-L-Glu)(n) + 2 H2O + 2 H(+). Its function is as follows. Catalyzes the oxidation of F420H(2) with O(2). May be involved in O(2) detoxification, reducing the intracellular O(2) concentration to a level allowing growth at the expense of methane formation. The protein is Coenzyme F420H(2) oxidase of Methanothermobacter marburgensis (strain ATCC BAA-927 / DSM 2133 / JCM 14651 / NBRC 100331 / OCM 82 / Marburg) (Methanobacterium thermoautotrophicum).